Here is a 490-residue protein sequence, read N- to C-terminus: Cytochrome P450 71B28 (490 aa).

Residues 1-21 (MSVFLCFLCLLPLILIFLKNL) form a helical membrane-spanning segment. Residue Cys440 participates in heme binding.

The protein belongs to the cytochrome P450 family. Heme is required as a cofactor.

It localises to the membrane. This chain is Cytochrome P450 71B28 (CYP71B28), found in Arabidopsis thaliana (Mouse-ear cress).